A 174-amino-acid chain; its full sequence is Cell division protein FtsL (174 aa).

Over 1–38 (MLAAPRELSYIPQPVVSSKQSPRSGLSNRRRESRARQK) the chain is Cytoplasmic. Residues 39–59 (ILLLGLVLMGFVIGLSLTFLT) form a helical membrane-spanning segment. At 60–174 (MQVLIKGYKI…EPARQAGAGV (115 aa)) the chain is on the extracellular side.

Belongs to the FtsL family.

The protein resides in the cell membrane. In terms of biological role, essential cell division protein. The polypeptide is Cell division protein FtsL (Moorella thermoacetica (strain ATCC 39073 / JCM 9320)).